Reading from the N-terminus, the 507-residue chain is Maturase K (507 aa).

This sequence belongs to the intron maturase 2 family. MatK subfamily.

The protein localises to the plastid. It localises to the chloroplast. In terms of biological role, usually encoded in the trnK tRNA gene intron. Probably assists in splicing its own and other chloroplast group II introns. The polypeptide is Maturase K (Magnolia champaca (Yellow jade orchid tree)).